The sequence spans 195 residues: O-methyltransferase (195 aa).

It belongs to the methyltransferase superfamily.

It participates in secondary metabolite biosynthesis. In terms of biological role, O-methyltransferase; part of the gene cluster that mediates the biosynthesis of pyrophen and campyrone B, which represent a class of fungal amino acid-derived alpha-pyrone natural products. The first step of pyrophen biosynthesis is catalyzed by the PKS-NRPS hybrid synthetase ATPKS that uptakes and condensates L-phenylalanine and malonyl-CoA in order to produce desmethyldesacetylpyrophen. Although the A domain does not discriminate between 2 enantiomeric phenylalanines, the downstream KS domain must play a gate keeping role to stereoselectively accept the L-phenylalanyl-S-phosphopantetheine (Ppant)-T domain intermediate for chain elongation. The resulting amino acid derived diketide is off-loaded through lactonization to yield the alpha-pyrone intermediate desmethyldesacetylpyrophen. The cluster-specific O-methyltransferase (OMT) then methylates desmethyldesacetylpyrophen to desacetylpyrophen, which is further acetylated to pyrophen by an endogenous yet unidentified N-acetyltransferase. ATPKS has relaxed substrate specificity to activate and extend branched-chain amino acid L-leucine to produce small amounts of campyrone B. The protein is O-methyltransferase of Aspergillus niger (strain ATCC 1015 / CBS 113.46 / FGSC A1144 / LSHB Ac4 / NCTC 3858a / NRRL 328 / USDA 3528.7).